Consider the following 115-residue polypeptide: Large ribosomal subunit protein bL20 (115 aa).

It belongs to the bacterial ribosomal protein bL20 family.

Functionally, binds directly to 23S ribosomal RNA and is necessary for the in vitro assembly process of the 50S ribosomal subunit. It is not involved in the protein synthesizing functions of that subunit. This is Large ribosomal subunit protein bL20 from Borrelia hermsii (strain HS1 / DAH).